The primary structure comprises 2002 residues: [F-actin]-monooxygenase MICAL3 (2002 aa).

Residues 2–494 are monooxygenase domain; it reads EERKHETMNP…RHLYDTGETK (493 aa). FAD contacts are provided by residues cysteine 97, 116 to 118, 123 to 125, phenylalanine 183, tyrosine 298, and aspartate 398; these read EKR and RNN. The region spanning 518–624 is the Calponin-homology (CH) domain; the sequence is VARSSKLLGW…YLTQFYEMFK (107 aa). Serine 649 carries the post-translational modification Phosphoserine. The tract at residues 658-706 is disordered; the sequence is GQTISRKRSPKDKKEKDLDGAGKRRKTSQSEEEEAPRGHRGERPTLVST. The short motif at 663 to 684 is the Nuclear localization signal element; sequence RKRSPKDKKEKDLDGAGKRRKT. Basic and acidic residues predominate over residues 669-679; sequence DKKEKDLDGAG. Phosphoserine occurs at positions 685 and 687. The LIM zinc-binding domain maps to 762–824; the sequence is DTCYFCQKRV…KPHYCYRLSG (63 aa). Residues cysteine 764, cysteine 767, histidine 785, cysteine 788, cysteine 791, cysteine 794, cysteine 814, and histidine 817 each contribute to the Zn(2+) site. A disordered region spans residues 835–883; it reads PLSGKEAKGPLQDGATTDANGRANAVASSTERTPGSGVNGLEEPSIAKR. Phosphothreonine is present on threonine 887. 3 disordered regions span residues 907–1313, 1335–1776, and 1791–1821; these read QEVP…SPLA, RRSL…GKHR, and LSFS…TYTE. Over residues 938 to 950 the composition is skewed to acidic residues; it reads SEMEEEGEEEEEE. At serine 977 the chain carries Phosphoserine. The segment covering 991–1017 has biased composition (acidic residues); it reads NEEEEEEEEEYEEEEEEDYDEEEEESS. Residues 1041 to 1054 show a composition bias toward basic and acidic residues; sequence HWTHIREREEEERM. The span at 1055-1066 shows a compositional bias: low complexity; the sequence is APASESSASGAP. Residues 1068–1102 show a composition bias toward acidic residues; it reads DENDLEEDVDSEPAEIEGEAAEDGDPGDTGAELDD. 4 positions are modified to phosphoserine: serine 1134, serine 1143, serine 1160, and serine 1192. Residues 1150–1163 show a composition bias toward polar residues; sequence GPSQATSPIRSPQE. Residues 1191 to 1218 are compositionally biased toward basic and acidic residues; sequence KSPEERLFPEPLLPKEKPKADAPSDLKA. The segment covering 1239 to 1258 has biased composition (pro residues); sequence PGSPQPQPPVAASTPPPSPL. 2 stretches are compositionally biased toward polar residues: residues 1268-1280 and 1288-1302; these read TEAT…QSPI and KTST…QSQS. Serine 1274 bears the Phosphoserine mark. Threonine 1276 carries the phosphothreonine modification. A Phosphoserine modification is found at serine 1278. Phosphoserine is present on residues serine 1310 and serine 1337. The residue at position 1341 (threonine 1341) is a Phosphothreonine. Serine 1371 and serine 1384 each carry phosphoserine. The segment covering 1407-1422 has biased composition (basic and acidic residues); sequence PSDRELRSAQEERREL. The span at 1423 to 1435 shows a compositional bias: low complexity; the sequence is SSSSGLGLHGSSS. Position 1433 is a phosphoserine (serine 1433). Over residues 1436 to 1451 the composition is skewed to polar residues; the sequence is NMKTLGSQSFNTSDSA. Threonine 1454 is subject to Phosphothreonine. Over residues 1456–1467 the composition is skewed to pro residues; it reads PSSPPPPPPPGE. Residues 1516-1530 are compositionally biased toward acidic residues; the sequence is SVEEIPFADDVEDTY. A compositionally biased stretch (basic and acidic residues) spans 1588–1604; that stretch reads EAKELAEERMRAREKSV. At serine 1649 the chain carries Phosphoserine. Threonine 1651 carries the post-translational modification Phosphothreonine. A compositionally biased stretch (basic and acidic residues) spans 1657 to 1668; sequence GSEEPTLKHEAT. The span at 1674–1694 shows a compositional bias: low complexity; it reads SPPSDSGGPDGSFTSSEGSSG. The segment covering 1695–1713 has biased composition (basic residues); it reads KSKKRSSLFSPRRNKKEKK. 2 positions are modified to phosphoserine: serine 1701 and serine 1704. A compositionally biased stretch (polar residues) spans 1760 to 1769; that stretch reads CPSTPSSGAT. Residues 1804–1820 show a composition bias toward basic and acidic residues; the sequence is VLEKSSQKSRREPRTYT. The stretch at 1821-1992 forms a coiled coil; sequence EEELNAKLTR…EEDKDLEAAM (172 aa). The bMERB domain maps to 1841–1990; it reads KQEELKRLHR…EREEDKDLEA (150 aa). Position 1912 is a phosphoserine (serine 1912).

Belongs to the Mical family. As to quaternary structure, interacts with RAB1B, RAB8A, RAB10, RAB13 and RAB15 (in their GTP-bound forms); binding to RAB1B is of low affinity compared to other Rab proteins; at least in case of RAB8A can bind 2 molecules of RAB8A simultaneously through a high and a low affinity binding site, respectively. Interacts with ERC1 and RAB8A; may bridge ERC1 with RAB8A. Interacts with KIF23 and ERC1; enhances the interaction between KIF23 and ERC1. Interacts with NINL isoform 2. FAD is required as a cofactor. In terms of tissue distribution, ubiquitous.

It is found in the cytoplasm. It localises to the cell cortex. The protein resides in the cytoskeleton. Its subcellular location is the nucleus. The protein localises to the midbody. It is found in the spindle. It localises to the cilium basal body. It catalyses the reaction L-methionyl-[F-actin] + NADPH + O2 + H(+) = L-methionyl-(R)-S-oxide-[F-actin] + NADP(+) + H2O. Functionally, monooxygenase that promotes depolymerization of F-actin by mediating oxidation of specific methionine residues on actin to form methionine-sulfoxide, resulting in actin filament disassembly and preventing repolymerization. In the absence of actin, it also functions as a NADPH oxidase producing H(2)O(2). Seems to act as Rab effector protein and plays a role in vesicle trafficking. Involved in exocytic vesicles tethering and fusion: the monooxygenase activity is required for this process and implicates RAB8A associated with exocytotic vesicles. Required for cytokinesis. Contributes to stabilization and/or maturation of the intercellular bridge independently of its monooxygenase activity. Promotes recruitment of Rab8 and ERC1 to the intercellular bridge, and together these proteins are proposed to function in timely abscission. The chain is [F-actin]-monooxygenase MICAL3 (MICAL3) from Homo sapiens (Human).